We begin with the raw amino-acid sequence, 431 residues long: Phosphoribosylamine--glycine ligase (431 aa).

An ATP-grasp domain is found at 108-315 (KDFLARHEIP…LVLLVEAAFA (208 aa)). Residue 134–195 (LQEKGAPIVI…EEFLDGEEAS (62 aa)) coordinates ATP. Mg(2+)-binding residues include Glu-285 and Asn-287.

The protein belongs to the GARS family. Requires Mg(2+) as cofactor. The cofactor is Mn(2+).

It carries out the reaction 5-phospho-beta-D-ribosylamine + glycine + ATP = N(1)-(5-phospho-beta-D-ribosyl)glycinamide + ADP + phosphate + H(+). It participates in purine metabolism; IMP biosynthesis via de novo pathway; N(1)-(5-phospho-D-ribosyl)glycinamide from 5-phospho-alpha-D-ribose 1-diphosphate: step 2/2. This chain is Phosphoribosylamine--glycine ligase, found in Pseudomonas putida (strain ATCC 47054 / DSM 6125 / CFBP 8728 / NCIMB 11950 / KT2440).